A 190-amino-acid polypeptide reads, in one-letter code: MDVRTLAVGKAHLEALLATRKMTLEHLQDVRHDATQVYFDGLEHLQNVAQYLAIPLSEFFVGQTQSDLDDGVKIARRNGGFKREEIRGGVHYYTYEHLVTTNQDPGLMALRLDLHSDDEQPLRLNGGHGSREIVYVTRGAVRVRWVGDNDELKEDVLNEGDSIFILPNVPHSFTNHVGGAKSEIIAINYG.

The region spanning 10–60 (KAHLEALLATRKMTLEHLQDVRHDATQVYFDGLEHLQNVAQYLAIPLSEFF) is the HTH cro/C1-type domain. The H-T-H motif DNA-binding region spans 20–40 (RKMTLEHLQDVRHDATQVYFD). Residues arginine 87, tyrosine 95, 125–128 (NGGH), and glutamate 132 contribute to the substrate site. Residues histidine 128, glutamate 132, and histidine 171 each contribute to the Fe cation site. The Cupin type-2 domain occupies 128 to 176 (HGSREIVYVTRGAVRVRWVGDNDELKEDVLNEGDSIFILPNVPHSFTNH).

It belongs to the non-heme iron-dependent dioxygenase family. As to quaternary structure, homotrimer. The cofactor is Fe(2+).

The enzyme catalyses (S)-2-hydroxypropylphosphonate + H2O2 = (1R,2S)-epoxypropylphosphonate + 2 H2O. It functions in the pathway antibiotic biosynthesis; fosfomycin biosynthesis. Functionally, non-heme-dependent dioxygenase that catalyzes the oxidative epoxidation of (S)-2-hydroxypropylphosphonate into (1R,2S)-epoxypropylphosphonate, the final step in the biosynthesis of fosfomycin antibiotic. In Pseudomonas syringae, this protein is (S)-2-hydroxypropylphosphonic acid epoxidase (hppE).